Consider the following 894-residue polypeptide: Eukaryotic translation initiation factor 3 subunit C (894 aa).

Disordered regions lie at residues 1 to 28 and 162 to 235; these read MSRF…KANK and SDYR…VTKM. 3 stretches are compositionally biased toward acidic residues: residues 12–22, 169–189, and 203–214; these read SDTDSSEDEVE, DEDG…EEVP, and SESESDSDDDDS. The span at 215–224 shows a compositional bias: polar residues; the sequence is FNWSSEPDTN. One can recognise a PCI domain in the interval 625–801; it reads YHMHINVELM…DCLIMHRVEP (177 aa). Residues 824–894 form a disordered region; sequence QILEPRTGRG…RRHPQKPRAF (71 aa). Over residues 845–854 the composition is skewed to basic and acidic residues; sequence RNERQGDKQK. Positions 855 to 870 are enriched in gly residues; sequence GSGGFQGERRGGPGGP. Residues 884 to 894 are compositionally biased toward basic residues; the sequence is QRRHPQKPRAF.

This sequence belongs to the eIF-3 subunit C family. As to quaternary structure, component of the eukaryotic translation initiation factor 3 (eIF-3) complex.

The protein localises to the cytoplasm. Functionally, component of the eukaryotic translation initiation factor 3 (eIF-3) complex, which is involved in protein synthesis of a specialized repertoire of mRNAs and, together with other initiation factors, stimulates binding of mRNA and methionyl-tRNAi to the 40S ribosome. The eIF-3 complex specifically targets and initiates translation of a subset of mRNAs involved in cell proliferation. The protein is Eukaryotic translation initiation factor 3 subunit C of Caenorhabditis briggsae.